Here is a 381-residue protein sequence, read N- to C-terminus: Cyclic AMP-AMP-GMP synthase (381 aa).

The ATP site is built by Q51, S53, R56, D69, D71, and R109. Catalysis depends on residues D69 and D71. D69 and D71 together coordinate Mg(2+). D121 is an active-site residue. Mg(2+)-binding residues include D121 and D196. Positions 196, 197, 204, 205, 210, 233, and 250 each coordinate ATP. Mg(2+)-binding residues include N258 and L260. The ATP site is built by V304 and R307. The interval 348-381 (GSKFPLPGPQGGDRNGGFTTPSKPAEPQKTGRFA) is disordered.

Belongs to the CD-NTase family. D02 subfamily. Monomer. Crystallizes as a Cap2 homodimer bound on each side by a CdnD monomer. The cofactor is Mg(2+). In bacteria expressing cap4-dncV-cap2-cap3, this protein is conjugated to a number of other proteins by Cap2, probably via this protein's C-terminal Ala residue. More conjugated DncV is found in the absence of Cap3.

The catalysed reaction is GTP + 2 ATP = 3',3',3'-cAAG + 3 diphosphate. With respect to regulation, primed for activation by Cap2 which conjugates it to cellular proteins; activation is target protein-specific (green fluorescent protein does not activate the enzyme), but which protein(s) activate it is unclear. Its function is as follows. Cyclic nucleotide synthase (second messenger synthase) of a CBASS antivirus system. CBASS (cyclic oligonucleotide-based antiphage signaling system) provides immunity against bacteriophages. The CD-NTase protein (CdnD, this protein) synthesizes cyclic nucleotides in response to infection; these serve as specific second messenger signals. The signals activate a diverse range of effectors, leading to bacterial cell death and thus abortive phage infection. A type II-C(AAG) CBASS system. Functionally, cyclic trinucleotide synthase that catalyzes the synthesis of 3',3',3'-cyclic AMP-AMP-GMP (cAAG) as the major product, a second messenger for cell signal transduction. Uses ATP as the first donor nucleotide, followed by GTP. Protects E.coli against phage T2 infection. When the cdnD-cap2-cap3-cap4 operon is introduced in E.coli there is a more than 10(3) decrease in the efficiency of T2 plaque formation. The operon does not protect against phage T5 and only about 10-fold against T7. Expression of cdnD-cap4 alone protects E.coli against phage T2 infection. This chain is Cyclic AMP-AMP-GMP synthase, found in Enterobacter hormaechei subsp. hoffmannii (strain UCI 50).